A 1169-amino-acid chain; its full sequence is Transcription-repair-coupling factor (1169 aa).

The region spanning 634–795 (DMERARPMDR…MLGVRDLSVI (162 aa)) is the Helicase ATP-binding domain. 647–654 (GDVGYGKT) lines the ATP pocket. Residues 748-751 (DEEQ) carry the DEEQ box motif. Residues 809–970 (VLEQNTNFIK…GFKIAMRDLN (162 aa)) form the Helicase C-terminal domain.

It in the N-terminal section; belongs to the UvrB family. In the C-terminal section; belongs to the helicase family. RecG subfamily.

The protein resides in the cytoplasm. Functionally, couples transcription and DNA repair by recognizing RNA polymerase (RNAP) stalled at DNA lesions. Mediates ATP-dependent release of RNAP and its truncated transcript from the DNA, and recruitment of nucleotide excision repair machinery to the damaged site. The protein is Transcription-repair-coupling factor of Staphylococcus epidermidis (strain ATCC 35984 / DSM 28319 / BCRC 17069 / CCUG 31568 / BM 3577 / RP62A).